The following is a 195-amino-acid chain: NADH dehydrogenase [ubiquinone] iron-sulfur protein 3 (195 aa).

It belongs to the complex I 30 kDa subunit family. As to quaternary structure, complex I is composed of about 45 different subunits. This is a component of the iron-sulfur (IP) fragment of the enzyme.

Its subcellular location is the mitochondrion inner membrane. It catalyses the reaction a ubiquinone + NADH + 5 H(+)(in) = a ubiquinol + NAD(+) + 4 H(+)(out). Core subunit of the mitochondrial membrane respiratory chain NADH dehydrogenase (Complex I) that is believed to belong to the minimal assembly required for catalysis. Complex I functions in the transfer of electrons from NADH to the respiratory chain. The immediate electron acceptor for the enzyme is believed to be ubiquinone. This Marchantia polymorpha (Common liverwort) protein is NADH dehydrogenase [ubiquinone] iron-sulfur protein 3 (NAD9).